The sequence spans 217 residues: Probable nicotinate-nucleotide adenylyltransferase (217 aa).

The protein belongs to the NadD family.

The catalysed reaction is nicotinate beta-D-ribonucleotide + ATP + H(+) = deamido-NAD(+) + diphosphate. The protein operates within cofactor biosynthesis; NAD(+) biosynthesis; deamido-NAD(+) from nicotinate D-ribonucleotide: step 1/1. Its function is as follows. Catalyzes the reversible adenylation of nicotinate mononucleotide (NaMN) to nicotinic acid adenine dinucleotide (NaAD). In Dechloromonas aromatica (strain RCB), this protein is Probable nicotinate-nucleotide adenylyltransferase.